Reading from the N-terminus, the 273-residue chain is Formamidopyrimidine-DNA glycosylase (273 aa).

Residue Pro-2 is the Schiff-base intermediate with DNA of the active site. Glu-3 (proton donor) is an active-site residue. Catalysis depends on Lys-60, which acts as the Proton donor; for beta-elimination activity. DNA contacts are provided by His-94, Arg-113, and Arg-154. Residues Asn-239–Arg-273 form an FPG-type zinc finger. The active-site Proton donor; for delta-elimination activity is the Arg-263.

This sequence belongs to the FPG family. As to quaternary structure, monomer. The cofactor is Zn(2+).

It carries out the reaction Hydrolysis of DNA containing ring-opened 7-methylguanine residues, releasing 2,6-diamino-4-hydroxy-5-(N-methyl)formamidopyrimidine.. The enzyme catalyses 2'-deoxyribonucleotide-(2'-deoxyribose 5'-phosphate)-2'-deoxyribonucleotide-DNA = a 3'-end 2'-deoxyribonucleotide-(2,3-dehydro-2,3-deoxyribose 5'-phosphate)-DNA + a 5'-end 5'-phospho-2'-deoxyribonucleoside-DNA + H(+). Functionally, involved in base excision repair of DNA damaged by oxidation or by mutagenic agents. Acts as a DNA glycosylase that recognizes and removes damaged bases. Has a preference for oxidized purines, such as 7,8-dihydro-8-oxoguanine (8-oxoG). Has AP (apurinic/apyrimidinic) lyase activity and introduces nicks in the DNA strand. Cleaves the DNA backbone by beta-delta elimination to generate a single-strand break at the site of the removed base with both 3'- and 5'-phosphates. This chain is Formamidopyrimidine-DNA glycosylase, found in Roseiflexus sp. (strain RS-1).